The primary structure comprises 606 residues: Gastrula zinc finger protein XlCGF66.1 (606 aa).

Disordered stretches follow at residues 1–31 (MGMW…RGKK) and 240–271 (TLHS…KRQK). The segment covering 242-262 (HSKDSCNEGHKHLSHKSDYNK) has biased composition (basic and acidic residues). C2H2-type zinc fingers lie at residues 273–295 (FSCS…QKTH), 300–322 (LLCL…RQTH), 328–350 (FSCS…QITH), 384–407 (DFCS…QQVH), 413–435 (FSCT…QRTH), 441–464 (YSCS…QQVH), 470–492 (FFCS…QRTH), 498–521 (YSCS…QQVH), 527–549 (FSCS…QRTH), 555–578 (DFCF…QQVH), and 584–606 (FSCS…HRTH).

This sequence belongs to the krueppel C2H2-type zinc-finger protein family.

The protein resides in the nucleus. In terms of biological role, may be involved in transcriptional regulation. The chain is Gastrula zinc finger protein XlCGF66.1 from Xenopus laevis (African clawed frog).